A 184-amino-acid polypeptide reads, in one-letter code: ATP synthase subunit b, chloroplastic (184 aa).

The chain crosses the membrane as a helical span at residues 27 to 49 (FATNPINLSVVLGVLIFFGKGVL).

It belongs to the ATPase B chain family. As to quaternary structure, F-type ATPases have 2 components, F(1) - the catalytic core - and F(0) - the membrane proton channel. F(1) has five subunits: alpha(3), beta(3), gamma(1), delta(1), epsilon(1). F(0) has four main subunits: a(1), b(1), b'(1) and c(10-14). The alpha and beta chains form an alternating ring which encloses part of the gamma chain. F(1) is attached to F(0) by a central stalk formed by the gamma and epsilon chains, while a peripheral stalk is formed by the delta, b and b' chains.

The protein resides in the plastid. Its subcellular location is the chloroplast thylakoid membrane. F(1)F(0) ATP synthase produces ATP from ADP in the presence of a proton or sodium gradient. F-type ATPases consist of two structural domains, F(1) containing the extramembraneous catalytic core and F(0) containing the membrane proton channel, linked together by a central stalk and a peripheral stalk. During catalysis, ATP synthesis in the catalytic domain of F(1) is coupled via a rotary mechanism of the central stalk subunits to proton translocation. Its function is as follows. Component of the F(0) channel, it forms part of the peripheral stalk, linking F(1) to F(0). The chain is ATP synthase subunit b, chloroplastic from Amborella trichopoda.